We begin with the raw amino-acid sequence, 114 residues long: T cell receptor beta variable 5-5 (114 aa).

The first 21 residues, 1–21, serve as a signal peptide directing secretion; sequence MGPGLLCWVLLCLLGAGPVDA. The 93-residue stretch at 22-114 folds into the Ig-like domain; the sequence is GVTQSPTHLI…SALYLCASSL (93 aa). The cysteines at positions 42 and 110 are disulfide-linked. Asn-90 is a glycosylation site (N-linked (GlcNAc...) asparagine).

As to quaternary structure, alpha-beta TR is a heterodimer composed of an alpha and beta chain; disulfide-linked. The alpha-beta TR is associated with the transmembrane signaling CD3 coreceptor proteins to form the TR-CD3 (TcR or TCR). The assembly of alpha-beta TR heterodimers with CD3 occurs in the endoplasmic reticulum where a single alpha-beta TR heterodimer associates with one CD3D-CD3E heterodimer, one CD3G-CD3E heterodimer and one CD247 homodimer forming a stable octameric structure. CD3D-CD3E and CD3G-CD3E heterodimers preferentially associate with TR alpha and TR beta chains, respectively. The association of the CD247 homodimer is the last step of TcR assembly in the endoplasmic reticulum and is required for transport to the cell surface.

It localises to the cell membrane. Its function is as follows. V region of the variable domain of T cell receptor (TR) beta chain that participates in the antigen recognition. Alpha-beta T cell receptors are antigen specific receptors which are essential to the immune response and are present on the cell surface of T lymphocytes. Recognize peptide-major histocompatibility (MH) (pMH) complexes that are displayed by antigen presenting cells (APC), a prerequisite for efficient T cell adaptive immunity against pathogens. Binding of alpha-beta TR to pMH complex initiates TR-CD3 clustering on the cell surface and intracellular activation of LCK that phosphorylates the ITAM motifs of CD3G, CD3D, CD3E and CD247 enabling the recruitment of ZAP70. In turn ZAP70 phosphorylates LAT, which recruits numerous signaling molecules to form the LAT signalosome. The LAT signalosome propagates signal branching to three major signaling pathways, the calcium, the mitogen-activated protein kinase (MAPK) kinase and the nuclear factor NF-kappa-B (NF-kB) pathways, leading to the mobilization of transcription factors that are critical for gene expression and essential for T cell growth and differentiation. The T cell repertoire is generated in the thymus, by V-(D)-J rearrangement. This repertoire is then shaped by intrathymic selection events to generate a peripheral T cell pool of self-MH restricted, non-autoaggressive T cells. Post-thymic interaction of alpha-beta TR with the pMH complexes shapes TR structural and functional avidity. This is T cell receptor beta variable 5-5 from Homo sapiens (Human).